A 148-amino-acid chain; its full sequence is Deoxyuridine 5'-triphosphate nucleotidohydrolase (148 aa).

Residues arginine 67–glycine 69, asparagine 80, leucine 84–aspartate 86, and methionine 94 each bind substrate.

It belongs to the dUTPase family. The cofactor is Mg(2+).

The enzyme catalyses dUTP + H2O = dUMP + diphosphate + H(+). It functions in the pathway pyrimidine metabolism; dUMP biosynthesis; dUMP from dCTP (dUTP route): step 2/2. In terms of biological role, this enzyme is involved in nucleotide metabolism: it produces dUMP, the immediate precursor of thymidine nucleotides and it decreases the intracellular concentration of dUTP so that uracil cannot be incorporated into DNA. The sequence is that of Deoxyuridine 5'-triphosphate nucleotidohydrolase from Burkholderia ambifaria (strain MC40-6).